A 382-amino-acid chain; its full sequence is Lipid-A-disaccharide synthase (382 aa).

The protein belongs to the LpxB family.

It carries out the reaction 2-N,3-O-bis[(3R)-3-hydroxytetradecanoyl]-alpha-D-glucosaminyl 1-phosphate + UDP-2-N,3-O-bis[(3R)-3-hydroxytetradecanoyl]-alpha-D-glucosamine = lipid A disaccharide (E. coli) + UDP + H(+). The enzyme catalyses a lipid X + a UDP-2-N,3-O-bis[(3R)-3-hydroxyacyl]-alpha-D-glucosamine = a lipid A disaccharide + UDP + H(+). Its pathway is glycolipid biosynthesis; lipid IV(A) biosynthesis; lipid IV(A) from (3R)-3-hydroxytetradecanoyl-[acyl-carrier-protein] and UDP-N-acetyl-alpha-D-glucosamine: step 5/6. Condensation of UDP-2,3-diacylglucosamine and 2,3-diacylglucosamine-1-phosphate to form lipid A disaccharide, a precursor of lipid A, a phosphorylated glycolipid that anchors the lipopolysaccharide to the outer membrane of the cell. The sequence is that of Lipid-A-disaccharide synthase from Sodalis glossinidius (strain morsitans).